A 180-amino-acid chain; its full sequence is Ribulose bisphosphate carboxylase small subunit, chloroplastic (180 aa).

The transit peptide at 1–56 (MASSIMSSAAVATRSNGAQASMVAPFTGLKSNASFPVSRKTNLDITSIASNGGRVR) directs the protein to the chloroplast.

It belongs to the RuBisCO small chain family. In terms of assembly, heterohexadecamer of 8 large and 8 small subunits.

Its subcellular location is the plastid. The protein localises to the chloroplast. Its function is as follows. RuBisCO catalyzes two reactions: the carboxylation of D-ribulose 1,5-bisphosphate, the primary event in carbon dioxide fixation, as well as the oxidative fragmentation of the pentose substrate. Both reactions occur simultaneously and in competition at the same active site. Although the small subunit is not catalytic it is essential for maximal activity. This is Ribulose bisphosphate carboxylase small subunit, chloroplastic from Stellaria longipes (Longstalk starwort).